We begin with the raw amino-acid sequence, 178 residues long: Adenine phosphoribosyltransferase (178 aa).

The protein belongs to the purine/pyrimidine phosphoribosyltransferase family. In terms of assembly, homodimer.

The protein resides in the cytoplasm. It catalyses the reaction AMP + diphosphate = 5-phospho-alpha-D-ribose 1-diphosphate + adenine. It participates in purine metabolism; AMP biosynthesis via salvage pathway; AMP from adenine: step 1/1. In terms of biological role, catalyzes a salvage reaction resulting in the formation of AMP, that is energically less costly than de novo synthesis. In Cereibacter sphaeroides (strain ATCC 17023 / DSM 158 / JCM 6121 / CCUG 31486 / LMG 2827 / NBRC 12203 / NCIMB 8253 / ATH 2.4.1.) (Rhodobacter sphaeroides), this protein is Adenine phosphoribosyltransferase.